We begin with the raw amino-acid sequence, 207 residues long: Ribosome maturation factor RimM (207 aa).

Residues 114–207 (DDEYYWVDLI…RIDSDWPLDY (94 aa)) enclose the PRC barrel domain.

The protein belongs to the RimM family. As to quaternary structure, binds ribosomal protein uS19.

Its subcellular location is the cytoplasm. Its function is as follows. An accessory protein needed during the final step in the assembly of 30S ribosomal subunit, possibly for assembly of the head region. Essential for efficient processing of 16S rRNA. May be needed both before and after RbfA during the maturation of 16S rRNA. It has affinity for free ribosomal 30S subunits but not for 70S ribosomes. This Bordetella bronchiseptica (strain ATCC BAA-588 / NCTC 13252 / RB50) (Alcaligenes bronchisepticus) protein is Ribosome maturation factor RimM.